The sequence spans 294 residues: Proteasome subunit beta (294 aa).

A propeptide spans methionine 1 to glycine 65 (removed in mature form; by autocatalysis). The Nucleophile role is filled by threonine 66.

This sequence belongs to the peptidase T1B family. As to quaternary structure, the 20S proteasome core is composed of 14 alpha and 14 beta subunits that assemble into four stacked heptameric rings, resulting in a barrel-shaped structure. The two inner rings, each composed of seven catalytic beta subunits, are sandwiched by two outer rings, each composed of seven alpha subunits. The catalytic chamber with the active sites is on the inside of the barrel. Has a gated structure, the ends of the cylinder being occluded by the N-termini of the alpha-subunits. Is capped by the proteasome-associated ATPase, ARC.

It is found in the cytoplasm. It catalyses the reaction Cleavage of peptide bonds with very broad specificity.. It participates in protein degradation; proteasomal Pup-dependent pathway. Its activity is regulated as follows. The formation of the proteasomal ATPase ARC-20S proteasome complex, likely via the docking of the C-termini of ARC into the intersubunit pockets in the alpha-rings, may trigger opening of the gate for substrate entry. Interconversion between the open-gate and close-gate conformations leads to a dynamic regulation of the 20S proteasome proteolysis activity. In terms of biological role, component of the proteasome core, a large protease complex with broad specificity involved in protein degradation. In Rhodococcus opacus (strain B4), this protein is Proteasome subunit beta.